Here is a 584-residue protein sequence, read N- to C-terminus: Membrane protein insertase YidC (584 aa).

5 consecutive transmembrane segments (helical) span residues 5–25 (SVIG…FMAP), 358–378 (FIGN…LVTY), 428–448 (LGGC…FYVF), 478–498 (IPLY…AVFL), and 516–536 (IYIF…GLGL). Residues 563–584 (ALSPVVAAPPKAPKKKKNARKR) are disordered. A compositionally biased stretch (basic residues) spans 574 to 584 (APKKKKNARKR).

Belongs to the OXA1/ALB3/YidC family. Type 1 subfamily. In terms of assembly, interacts with the Sec translocase complex via SecD. Specifically interacts with transmembrane segments of nascent integral membrane proteins during membrane integration.

The protein localises to the cell inner membrane. Required for the insertion and/or proper folding and/or complex formation of integral membrane proteins into the membrane. Involved in integration of membrane proteins that insert both dependently and independently of the Sec translocase complex, as well as at least some lipoproteins. Aids folding of multispanning membrane proteins. In Prosthecochloris aestuarii (strain DSM 271 / SK 413), this protein is Membrane protein insertase YidC.